Consider the following 613-residue polypeptide: Probable potassium transport system protein Kup (613 aa).

The next 11 membrane-spanning stretches (helical) occupy residues 38–58 (VLGV…LKYL), 91–111 (WILV…GMIT), 128–148 (PSFG…LFLF), 159–179 (FFGP…LVEI), 206–226 (FLVL…YADM), 238–258 (WSLL…AVLL), 270–290 (ALVP…ATII), 328–348 (IYVP…VAGF), 357–377 (AYGV…YYVA), 387–407 (GLNL…GASV), and 410–430 (LFHG…LMLT).

The protein belongs to the HAK/KUP transporter (TC 2.A.72) family.

It is found in the cell inner membrane. It carries out the reaction K(+)(in) + H(+)(in) = K(+)(out) + H(+)(out). Its function is as follows. Transport of potassium into the cell. Likely operates as a K(+):H(+) symporter. This Chlorobaculum tepidum (strain ATCC 49652 / DSM 12025 / NBRC 103806 / TLS) (Chlorobium tepidum) protein is Probable potassium transport system protein Kup.